The primary structure comprises 295 residues: Protease HtpX (295 aa).

2 consecutive transmembrane segments (helical) span residues 4 to 24 and 42 to 62; these read IFLF…VLRL and ALLI…LAIS. H147 is a binding site for Zn(2+). E148 is a catalytic residue. H151 contributes to the Zn(2+) binding site. Helical transmembrane passes span 155-175 and 197-217; these read GDMV…IFLA and FWIT…IIVM. E224 lines the Zn(2+) pocket.

It belongs to the peptidase M48B family. Zn(2+) is required as a cofactor.

It is found in the cell inner membrane. This chain is Protease HtpX, found in Thioalkalivibrio sulfidiphilus (strain HL-EbGR7).